Here is a 105-residue protein sequence, read N- to C-terminus: MSDDLRVTTAHLRELSAKQGRAAAELATATAVVDGVDTALRFTHGPISWGTAAAVEAVQHARRAAGTGMVKVSQELETKLDTAAGRYHRTDSTMGDALDETIQPR.

The protein belongs to the EspC family.

In terms of biological role, may be involved in assembly of the ESX-1 / type VII specialized secretion system (T7SS), which exports several proteins including EsxA and EsxB. Involved in DNA conjugation, in at least recipient strain. This is an uncharacterized protein from Mycolicibacterium smegmatis (strain MKD8) (Mycobacterium smegmatis).